Reading from the N-terminus, the 271-residue chain is Calretinin (271 aa).

EF-hand domains follow at residues 16 to 51 (LTASQFLEIWKHFDADGNGYIEGKELENFFQELEKA), 63 to 98 (NFGEKMKEFMQKYDKNSDGKIEMAELAQILPTEENF), 107 to 142 (GSSAEFMEAWRKYDTDRSGYIEANELKGFLSDLLKK), 151 to 186 (KLQEYTQTILRMFDLNGDGKLGLSEMSRLLPVQENF), 195 to 230 (LTSEEFNAIFTFYDKDGSGYIDENELDALLKDLYEK), and 235 to 270 (MNIQQLTTYRKSVMSLAEAGKLYRKDLEIVLCSEPP). 25 residues coordinate Ca(2+): Asp-29, Asp-31, Asn-33, Tyr-35, Glu-40, Asp-76, Asn-78, Asp-80, Lys-82, Glu-87, Asp-120, Asp-122, Ser-124, Tyr-126, Glu-131, Asp-164, Asn-166, Asp-168, Lys-170, Glu-175, Asp-208, Asp-210, Ser-212, Tyr-214, and Glu-219. Tyr-214 is modified (phosphotyrosine).

The protein belongs to the calbindin family.

It is found in the synapse. The protein localises to the cell projection. The protein resides in the dendrite. In terms of biological role, calcium-binding protein involved in calcium homeostasis and signal transduction. It plays a critical role in buffering intracellular calcium levels and modulating calcium-dependent signaling pathways. Predominantly expressed in specific neuronal populations, influences synaptic plasticity and neuronal excitability, contributing to learning and memory. During embryonic development, it facilitates neuronal differentiation and maturation. This Rattus norvegicus (Rat) protein is Calretinin (Calb2).